The following is a 354-amino-acid chain: Histidinol-phosphate aminotransferase (354 aa).

Lys215 bears the N6-(pyridoxal phosphate)lysine mark.

Belongs to the class-II pyridoxal-phosphate-dependent aminotransferase family. Histidinol-phosphate aminotransferase subfamily. Homodimer. Pyridoxal 5'-phosphate serves as cofactor.

It catalyses the reaction L-histidinol phosphate + 2-oxoglutarate = 3-(imidazol-4-yl)-2-oxopropyl phosphate + L-glutamate. Its pathway is amino-acid biosynthesis; L-histidine biosynthesis; L-histidine from 5-phospho-alpha-D-ribose 1-diphosphate: step 7/9. In Vesicomyosocius okutanii subsp. Calyptogena okutanii (strain HA), this protein is Histidinol-phosphate aminotransferase.